The primary structure comprises 359 residues: EGF-like domain containing protein 2 (359 aa).

An N-terminal signal peptide occupies residues 1–20 (MPPFISHFFLLSTFASLALC). EGF-like domains lie at 21-55 (SFYC…FNCG) and 61-93 (ISAA…PTCQ). Disulfide bonds link Cys-24–Cys-37, Cys-31–Cys-43, Cys-45–Cys-54, Cys-65–Cys-75, Cys-69–Cys-81, and Cys-83–Cys-92.

In terms of tissue distribution, prismatic layer of shell (at protein level). Expressed primarily in the mantle with highest level in the mantle edge and lower level in the mantle pallium.

The protein localises to the secreted. The sequence is that of EGF-like domain containing protein 2 from Margaritifera margaritifera (Freshwater pearl mussel).